The following is a 185-amino-acid chain: Ribosome-recycling factor (185 aa).

The protein belongs to the RRF family.

It is found in the cytoplasm. Its function is as follows. Responsible for the release of ribosomes from messenger RNA at the termination of protein biosynthesis. May increase the efficiency of translation by recycling ribosomes from one round of translation to another. The chain is Ribosome-recycling factor from Desulfatibacillum aliphaticivorans.